The chain runs to 394 residues: GTPase Obg (394 aa).

The Obg domain occupies 4–162 (SNFVDYVKIY…LMVILELKLL (159 aa)). Residues 163-329 (ADVGLVGFPN…LKDILWTELN (167 aa)) form the OBG-type G domain. Residues 169-176 (GFPNAGKS), 194-198 (FTTLE), 216-219 (DIPG), 283-286 (TKSD), and 310-312 (SSV) contribute to the GTP site. Positions 176 and 196 each coordinate Mg(2+). The interval 358 to 394 (KDMGEDEDFEYEYEEDADDDFDYEYEDENWDEEEEKK) is disordered. Over residues 361-394 (GEDEDFEYEYEEDADDDFDYEYEDENWDEEEEKK) the composition is skewed to acidic residues.

Belongs to the TRAFAC class OBG-HflX-like GTPase superfamily. OBG GTPase family. Monomer. Requires Mg(2+) as cofactor.

It localises to the cytoplasm. In terms of biological role, an essential GTPase which binds GTP, GDP and possibly (p)ppGpp with moderate affinity, with high nucleotide exchange rates and a fairly low GTP hydrolysis rate. Plays a role in control of the cell cycle, stress response, ribosome biogenesis and in those bacteria that undergo differentiation, in morphogenesis control. This is GTPase Obg from Phocaeicola vulgatus (strain ATCC 8482 / DSM 1447 / JCM 5826 / CCUG 4940 / NBRC 14291 / NCTC 11154) (Bacteroides vulgatus).